Reading from the N-terminus, the 1059-residue chain is Ubiquitin carboxyl-terminal hydrolase 36 (1059 aa).

Disordered regions lie at residues 22–45 and 102–145; these read LGGNSSAGSSTDQAKSGEDTNGSL and GKLV…KPKR. Positions 23–45 are enriched in polar residues; it reads GGNSSAGSSTDQAKSGEDTNGSL. The segment covering 121 to 138 has biased composition (low complexity); sequence HPNNQSHHNHPHPTSNPN. The region spanning 168-457 is the USP domain; that stretch reads TGMINVGNTC…NAYIMFFELD (290 aa). The Nucleophile role is filled by cysteine 177. Histidine 416 (proton acceptor) is an active-site residue. Disordered stretches follow at residues 464 to 512, 554 to 853, 941 to 1005, and 1022 to 1059; these read PPAN…YTNG, ATSA…VTSN, RQRD…FYNQ, and FGGAGSAKFQQQRALQRHLSAGGGFSRRQPSAQQQQQT. 2 stretches are compositionally biased toward low complexity: residues 479–494 and 561–580; these read STTPVPAATVSSPSPT and NGNKSSSPSSNSSSNHKSIN. Phosphoserine occurs at positions 490 and 492. Polar residues predominate over residues 603-615; sequence TTAQLPSMPNMTE. A phosphothreonine mark is found at threonine 632 and threonine 636. 2 positions are modified to phosphoserine: serine 646 and serine 648. Over residues 673–702 the composition is skewed to polar residues; sequence ESGQTNGHSKTNGSLTNGSASSSVHVNNSK. Residues 703 to 720 are compositionally biased toward basic and acidic residues; it reads QKTDAIDEIFKSLKKSAD. Position 721 is a phosphoserine (serine 721). Acidic residues predominate over residues 721 to 730; it reads SEEDDDEEEP. Low complexity predominate over residues 740–750; it reads PQKQSQSQSKA. Positions 751–760 are enriched in pro residues; that stretch reads PPSPKTPPSP. A Phosphoserine modification is found at serine 753. Threonine 756 is modified (phosphothreonine). Serine 759 is subject to Phosphoserine. A compositionally biased stretch (acidic residues) spans 779–788; the sequence is DAIDDDDDAV. A Phosphothreonine modification is found at threonine 799. The span at 806–818 shows a compositional bias: polar residues; that stretch reads NPFSSSKPSTDSP. The residue at position 817 (serine 817) is a Phosphoserine. Threonine 820 is modified (phosphothreonine). Over residues 833-853 the composition is skewed to polar residues; the sequence is ALKSHQQPRVGNGYQSNVTSN. The span at 963–974 shows a compositional bias: low complexity; that stretch reads SGSAKGNNASNS.

Belongs to the peptidase C19 family. As to quaternary structure, interacts with atms/PAF1, but not with CycT.

The protein resides in the nucleus. It localises to the nucleolus. The catalysed reaction is Thiol-dependent hydrolysis of ester, thioester, amide, peptide and isopeptide bonds formed by the C-terminal Gly of ubiquitin (a 76-residue protein attached to proteins as an intracellular targeting signal).. Required for maintaining multiple types of adult stem cells, including male and female germline, epithelial follicle cell and intestinal stem cells. May function as a transcriptional repressor by continually deubiquiting histone H2B at the promoters of genes critical for cellular differentiation, thereby preventing histone H3 'Lys-4' trimethylation (H3K4). Controls selective autophagy activation by ubiquitinated proteins. This Drosophila sechellia (Fruit fly) protein is Ubiquitin carboxyl-terminal hydrolase 36 (Usp36).